The primary structure comprises 225 residues: Ras-related protein Rab-32 (225 aa).

Residue Ala-2 is modified to N-acetylalanine. GTP is bound by residues Val-36, Gly-37, Lys-38, Thr-39, Ser-40, Ser-51, Gln-52, Tyr-54, and Thr-57. Thr-39 provides a ligand contact to Mg(2+). Positions 48-62 match the Switch 1 motif; that stretch reads QLFSQHYRATIGVDF. Thr-57 contributes to the Mg(2+) binding site. Ser-71 is subject to Phosphoserine. Residue Asp-81 coordinates Mg(2+). Residues Gly-84, Asn-143, Lys-144, Asp-146, Ala-175, and Lys-176 each contribute to the GTP site. Residues 84 to 97 carry the Switch 2 motif; it reads GQERFGNMTRVYYK. Residues 178–197 are PKA-RII subunit binding domain; the sequence is NINIEEAARFLVEKILVNHQ. S-geranylgeranyl cysteine attachment occurs at residues Cys-224 and Cys-225.

The protein belongs to the small GTPase superfamily. Rab family. Interacts with ANKRD27. A decreased interaction with ANKRD27 seen in the presence of SGSM2. Interacts with LRRK2 (via N-terminus); this interaction results in stimulation of RAB10 phosphorylation by LRRK2. It depends on Mg(2+) as a cofactor. As to expression, widely expressed with high levels in heart, liver, kidney, bone marrow, testis, colon and fetal lung.

It localises to the mitochondrion. The protein localises to the mitochondrion outer membrane. The protein resides in the cytoplasmic vesicle. It is found in the phagosome. Its subcellular location is the phagosome membrane. It localises to the melanosome. The protein localises to the melanosome membrane. It carries out the reaction GTP + H2O = GDP + phosphate + H(+). With respect to regulation, regulated by guanine the nucleotide exchange factor (GEF) BLOC-3 complex composed of HPS1 and HPS4 which promote the exchange of bound GDP for free GTP. Regulated by the GTPase activating protein (GAP) SGSM2/RUTBC1 which increases the GTP hydrolysis activity. Inhibited by GDP dissociation inhibitors (GDIs) which prevent Rab-GDP dissociation. Its function is as follows. The small GTPases Rab are key regulators of intracellular membrane trafficking, from the formation of transport vesicles to their fusion with membranes. Rabs cycle between an inactive GDP-bound form and an active GTP-bound form that is able to recruit to membranes different set of downstream effectors directly responsible for vesicle formation, movement, tethering and fusion. Also acts as an A-kinase anchoring protein by binding to the type II regulatory subunit of protein kinase A and anchoring it to the mitochondrion. Also involved in synchronization of mitochondrial fission. Plays a role in the maturation of phagosomes that engulf pathogens, such as S.aureus and M.tuberculosis. Plays an important role in the control of melanin production and melanosome biogenesis. In concert with RAB38, regulates the proper trafficking of melanogenic enzymes TYR, TYRP1 and DCT/TYRP2 to melanosomes in melanocytes. Stimulates phosphorylation of RAB10 'Thr-73' by LRRK2. The polypeptide is Ras-related protein Rab-32 (Homo sapiens (Human)).